A 391-amino-acid chain; its full sequence is MSSKRDYYEILEVSRSATQQDIKKAFRKLAMKYHPDRNKDSDAEEKFKEVNEAYEVLSDEEKRKLYDTYGHEGLNASGFHQGGFNPYDVFNSVFSGFDFEGGFGDVFSQFFGGGGSGFHNQEYIEEVDVNLVHEIKINFLEAANGCIKNVKYTRQVTCPDCNGSGSADGDVITCSDCNGEGFLVEQRRTLLGMFQTKKTCPSCKGEGQTIKNKCKKCKSRRMVDEVVERKVSIDSNVFYQDVVIVRGEGHIYKNLVGDLFLRVKIEPSRVFELRDNHVVVNVLVDPLVAITGGTILIPTLKEIKEINLKAGTKNGDIITIANGGINLKLDSRVYGANYNQKGDLIVVINYARPSEYSKQEITKLKEFIKPNKEVNLYETLMKKELNNKDSQ.

The J domain maps to 6 to 70 (DYYEILEVSR…EKRKLYDTYG (65 aa)). Residues 145–226 (GCIKNVKYTR…CKSRRMVDEV (82 aa)) form a CR-type zinc finger. 8 residues coordinate Zn(2+): cysteine 158, cysteine 161, cysteine 174, cysteine 177, cysteine 200, cysteine 203, cysteine 214, and cysteine 217. 4 CXXCXGXG motif repeats span residues 158–165 (CPDCNGSG), 174–181 (CSDCNGEG), 200–207 (CPSCKGEG), and 214–221 (CKKCKSRR).

This sequence belongs to the DnaJ family. Homodimer. The cofactor is Zn(2+).

It is found in the cytoplasm. In terms of biological role, participates actively in the response to hyperosmotic and heat shock by preventing the aggregation of stress-denatured proteins and by disaggregating proteins, also in an autonomous, DnaK-independent fashion. Unfolded proteins bind initially to DnaJ; upon interaction with the DnaJ-bound protein, DnaK hydrolyzes its bound ATP, resulting in the formation of a stable complex. GrpE releases ADP from DnaK; ATP binding to DnaK triggers the release of the substrate protein, thus completing the reaction cycle. Several rounds of ATP-dependent interactions between DnaJ, DnaK and GrpE are required for fully efficient folding. Also involved, together with DnaK and GrpE, in the DNA replication of plasmids through activation of initiation proteins. The sequence is that of Chaperone protein DnaJ from Mycoplasmoides gallisepticum (strain R(low / passage 15 / clone 2)) (Mycoplasma gallisepticum).